A 287-amino-acid chain; its full sequence is Protease HtpX (287 aa).

Transmembrane regions (helical) follow at residues 4-24 (VFLL…VMSI) and 33-53 (GGLL…SLAI). Position 139 (H139) interacts with Zn(2+). The active site involves E140. H143 contacts Zn(2+). 2 helical membrane passes run 154 to 174 (LIQG…AGII) and 195 to 215 (GVVF…VAYF). E220 is a Zn(2+) binding site.

The protein belongs to the peptidase M48B family. It depends on Zn(2+) as a cofactor.

Its subcellular location is the cell inner membrane. In Shewanella denitrificans (strain OS217 / ATCC BAA-1090 / DSM 15013), this protein is Protease HtpX.